The following is a 302-amino-acid chain: N-acetylmuramic acid 6-phosphate etherase (302 aa).

The SIS domain occupies 58–221; sequence IGESFLNGGR…STGAMVKTGK (164 aa). The active-site Proton donor is the E86. Residue E117 is part of the active site.

Belongs to the GCKR-like family. MurNAc-6-P etherase subfamily. As to quaternary structure, homodimer.

The catalysed reaction is N-acetyl-D-muramate 6-phosphate + H2O = N-acetyl-D-glucosamine 6-phosphate + (R)-lactate. It participates in amino-sugar metabolism; N-acetylmuramate degradation. Functionally, specifically catalyzes the cleavage of the D-lactyl ether substituent of MurNAc 6-phosphate, producing GlcNAc 6-phosphate and D-lactate. The sequence is that of N-acetylmuramic acid 6-phosphate etherase from Clostridium botulinum (strain Okra / Type B1).